A 166-amino-acid polypeptide reads, in one-letter code: Photosystem I assembly protein Ycf3 (166 aa).

TPR repeat units lie at residues 35-68 (AFTY…EIDP), 72-105 (SYIL…NPSL), and 120-153 (GEQA…APTN).

This sequence belongs to the Ycf3 family.

The protein localises to the plastid. Its subcellular location is the chloroplast thylakoid membrane. Functionally, essential for the assembly of the photosystem I (PSI) complex. May act as a chaperone-like factor to guide the assembly of the PSI subunits. The protein is Photosystem I assembly protein Ycf3 of Oltmannsiellopsis viridis (Marine flagellate).